The sequence spans 246 residues: MARKLAAGNWKMNGTGEHLAELENLAQGDLPEGVDVLICPPATLISRAADRAGDIAIGGQDCHAKTSGAHTGDLSADMLRDAGATYVIIGHSERRADHGEGDADVRAKTEAAQAAGLVAVVCIGETLEEREAGTTLEVVGAQLAGSLPDGVTAENTVVAYEPVWAIGTGKVPTLDQIAEVHDALRADLVARFGAAGKDLPLLYGGSVKPGNAAEIFGVSNVDGALVGGASLKAADFGPIIAALAAS.

9 to 11 (NWK) contributes to the substrate binding site. Histidine 91 acts as the Electrophile in catalysis. Glutamate 161 functions as the Proton acceptor in the catalytic mechanism. Residues glycine 167, serine 206, and 227–228 (GG) each bind substrate.

This sequence belongs to the triosephosphate isomerase family. Homodimer.

Its subcellular location is the cytoplasm. It catalyses the reaction D-glyceraldehyde 3-phosphate = dihydroxyacetone phosphate. It functions in the pathway carbohydrate biosynthesis; gluconeogenesis. The protein operates within carbohydrate degradation; glycolysis; D-glyceraldehyde 3-phosphate from glycerone phosphate: step 1/1. Its function is as follows. Involved in the gluconeogenesis. Catalyzes stereospecifically the conversion of dihydroxyacetone phosphate (DHAP) to D-glyceraldehyde-3-phosphate (G3P). This is Triosephosphate isomerase from Ruegeria sp. (strain TM1040) (Silicibacter sp.).